Here is a 280-residue protein sequence, read N- to C-terminus: Serine protease 33 (280 aa).

Positions 1-22 (MRGVSCLQVLLLLVLGAAGTQG) are cleaved as a signal peptide. One can recognise a Peptidase S1 domain in the interval 37–279 (IVGGRDGRDG…YSPWIQARVS (243 aa)). The cysteines at positions 62 and 78 are disulfide-linked. Catalysis depends on charge relay system residues H77 and D126. Cystine bridges form between C160–C237, C193–C216, and C227–C255. Residue S231 is the Charge relay system of the active site.

Belongs to the peptidase S1 family. As to expression, predominantly expressed in macrophages. Present in the spleen, small and large intestine, lung and brain (at protein level). Highly expressed in peripheral leukocytes, ovary, retina, spleen and stomach. Moderately expressed in thymus, uterus and platelets, as well as some brain tissues, such as thalamus and fetal brain.

It is found in the secreted. Serine protease that has amidolytic activity, cleaving its substrates before Arg residues. The chain is Serine protease 33 (PRSS33) from Homo sapiens (Human).